A 966-amino-acid chain; its full sequence is Catenin alpha-2 (966 aa).

Over residues 924-940 the composition is skewed to basic and acidic residues; that stretch reads PEKKPLVKREKPEEYQT. The disordered stretch occupies residues 924 to 952; that stretch reads PEKKPLVKREKPEEYQTRVRRGSQKKHIS. The segment covering 941–951 has biased composition (basic residues); that stretch reads RVRRGSQKKHI.

The protein belongs to the vinculin/alpha-catenin family.

The protein resides in the cell membrane. The protein localises to the cytoplasm. Its subcellular location is the cytoskeleton. It localises to the cell junction. It is found in the adherens junction. The protein resides in the cell projection. The protein localises to the axon. Its subcellular location is the nucleus. Its function is as follows. May function as a linker between cadherin adhesion receptors and the cytoskeleton to regulate cell-cell adhesion and differentiation in the nervous system. The polypeptide is Catenin alpha-2 (ctnna2) (Xenopus tropicalis (Western clawed frog)).